The chain runs to 313 residues: Ribosomal RNA small subunit methyltransferase H (313 aa).

S-adenosyl-L-methionine-binding positions include 35-37 (GGH), Asp-55, Phe-79, Asp-100, and Gln-107.

Belongs to the methyltransferase superfamily. RsmH family.

It localises to the cytoplasm. It catalyses the reaction cytidine(1402) in 16S rRNA + S-adenosyl-L-methionine = N(4)-methylcytidine(1402) in 16S rRNA + S-adenosyl-L-homocysteine + H(+). Its function is as follows. Specifically methylates the N4 position of cytidine in position 1402 (C1402) of 16S rRNA. The polypeptide is Ribosomal RNA small subunit methyltransferase H (Burkholderia ambifaria (strain ATCC BAA-244 / DSM 16087 / CCUG 44356 / LMG 19182 / AMMD) (Burkholderia cepacia (strain AMMD))).